Here is a 108-residue protein sequence, read N- to C-terminus: Ig kappa chain V-V region HP R16.7 (108 aa).

Positions Asp1 to Cys23 are framework-1. Cysteines 23 and 88 form a disulfide. Positions Arg24 to Asn34 are complementarity-determining-1. The tract at residues Trp35–Tyr49 is framework-2. The interval Tyr50–Ser56 is complementarity-determining-2. The tract at residues Gly57–Cys88 is framework-3. The segment at Gln89 to Thr97 is complementarity-determining-3. The interval Phe98–Arg108 is framework-4.

The protein is Ig kappa chain V-V region HP R16.7 of Mus musculus (Mouse).